Reading from the N-terminus, the 179-residue chain is Low molecular weight phosphotyrosine protein phosphatase (179 aa).

The Nucleophile role is filled by Cys15. Arg21 is a catalytic residue. The active-site Proton donor is Asp148.

Belongs to the low molecular weight phosphotyrosine protein phosphatase family.

The protein localises to the cytoplasm. The enzyme catalyses O-phospho-L-tyrosyl-[protein] + H2O = L-tyrosyl-[protein] + phosphate. It catalyses the reaction a phosphate monoester + H2O = an alcohol + phosphate. Functionally, acts on tyrosine phosphorylated proteins, low-MW aryl phosphates and natural and synthetic acyl phosphates. This is Low molecular weight phosphotyrosine protein phosphatase (acp1) from Dictyostelium discoideum (Social amoeba).